Here is a 134-residue protein sequence, read N- to C-terminus: ATP synthase epsilon chain, chloroplastic (134 aa).

It belongs to the ATPase epsilon chain family. In terms of assembly, F-type ATPases have 2 components, CF(1) - the catalytic core - and CF(0) - the membrane proton channel. CF(1) has five subunits: alpha(3), beta(3), gamma(1), delta(1), epsilon(1). CF(0) has three main subunits: a, b and c.

The protein localises to the plastid. It localises to the chloroplast thylakoid membrane. Its function is as follows. Produces ATP from ADP in the presence of a proton gradient across the membrane. This chain is ATP synthase epsilon chain, chloroplastic, found in Chlorella vulgaris (Green alga).